Here is a 194-residue protein sequence, read N- to C-terminus: Probable GTP-binding protein EngB (194 aa).

The region spanning 22 to 194 (LFLEVAFAGR…WQELDTMLNP (173 aa)) is the EngB-type G domain. Residues 30–37 (GRSNVGKS), 57–61 (GCTQL), 75–78 (DLPG), 142–145 (TKAD), and 173–175 (FSS) each bind GTP. Serine 37 and threonine 59 together coordinate Mg(2+).

This sequence belongs to the TRAFAC class TrmE-Era-EngA-EngB-Septin-like GTPase superfamily. EngB GTPase family. Requires Mg(2+) as cofactor.

Necessary for normal cell division and for the maintenance of normal septation. The protein is Probable GTP-binding protein EngB of Desulforapulum autotrophicum (strain ATCC 43914 / DSM 3382 / VKM B-1955 / HRM2) (Desulfobacterium autotrophicum).